Here is a 259-residue protein sequence, read N- to C-terminus: Leucine-rich repeat-containing protein 3B (259 aa).

An N-terminal signal peptide occupies residues 1–33 (MNLVDLWLTRSLSMCLLLQSFVLMILCFHSASM). Residues 34–64 (CPKGCLCSSSGGLNVTCSNANLKEIPRDLPP) enclose the LRRNT domain. A glycan (N-linked (GlcNAc...) asparagine) is linked at N47. LRR repeat units lie at residues 65 to 86 (ETVLLYLDSNQITSIPNEIFKD), 89 to 110 (QLRVLNLSKNGIEFIDEHAFKG), and 114 to 135 (TLQTLDLSDNRIQSVHKNAFNN). N-linked (GlcNAc...) asparagine glycosylation is present at N94. An LRRCT domain is found at 145–197 (NPWHCDCTLQQVLRSMASNHETAHNVICKTSVLDEHAGRPFLNAANDADLCNL). The helical transmembrane segment at 205–225 (AMLVTMFGWFTMVISYVVYYV) threads the bilayer.

It belongs to the LRRC3 family.

The protein localises to the membrane. This is Leucine-rich repeat-containing protein 3B (LRRC3B) from Homo sapiens (Human).